The primary structure comprises 565 residues: MELEYESKRPLYIPYAGPILLEFPLLNKGSAFTEEERNHFNLQGLLPDAVETIEEQAERAYRQYQDFKNDSDKHIYLRNIQDTNETLFYRLLDSHLSEMMPIIYTPTVGEACEHFSDIYRRARGLFISYPNRDRIDDMLQNATKQNVKVIVVTDGERILGLGDQGIGGMGIPIGKLSLYTACGGISPAYTLPVVLDVGTNNPQRLNDPLYMGWRHPRISGDEYHAFVEEFIQAVKRRWPNVLLQFEDFAQNNATPLLNRYRDEICCFNDDIQGTAAVTLGSLIAASRAAGSQLRDQTVTFLGAGSAGCGIAEQIIAQMKSEGLSEDEARARVFMVDRFGLLTDKLPNLLDFQSKLVQKSENLTAWQTQSDAISLLDVVRNAKPTILIGVSGQPGLFTEELIREMHKHCPRPIVMPLSNPTSRVEARPEDIINWTEGAALVATGSPFAPVHYKEQQIPIAQCNNSYIFPGIGLGVLASGATRVTDAMLMAASRALAECSPLATDGHGALLPDIDDIQGVSKCIAMEVGKAAQLQGMAVVTSEEALSKAIEHNFWRPQYRSYKRTSF.

Tyr104 serves as the catalytic Proton donor. Residue Arg157 participates in NAD(+) binding. The active-site Proton acceptor is the Lys175. Residues Glu246, Asp247, and Asp270 each contribute to the a divalent metal cation site. NAD(+) contacts are provided by Asp270 and Asn418.

This sequence belongs to the malic enzymes family. As to quaternary structure, homotetramer. Mg(2+) serves as cofactor. Mn(2+) is required as a cofactor.

It catalyses the reaction (S)-malate + NAD(+) = pyruvate + CO2 + NADH. It carries out the reaction oxaloacetate + H(+) = pyruvate + CO2. This Serratia proteamaculans (strain 568) protein is NAD-dependent malic enzyme.